The chain runs to 387 residues: F-box/LRR-repeat/kelch-repeat protein At2g29770 (387 aa).

The interval 1–34 (MVFISETSDDGSNGGDPTKNPQEEEEENLPPIPQ) is disordered. The F-box domain occupies 31–78 (PIPQGIPDELIESTVLLIRRCHYPTLSLLSKTFRRVISSSELYKSRFI). The stretch at 105-128 (CNIPRNISLHLREIKSLPPLNHGS) is one LRR 1 repeat. Kelch repeat units lie at residues 136–183 (HMYV…VIDG) and 184–231 (RIYV…FVTS). The LRR 2 repeat unit spans residues 196-219 (DHWIEVFDIENRIWSSVPHHRYCN).

This chain is F-box/LRR-repeat/kelch-repeat protein At2g29770, found in Arabidopsis thaliana (Mouse-ear cress).